Consider the following 404-residue polypeptide: MKLPIYLDYSATCPVDPRVAEKMMQCLTMDGLFGNPASRSHRFGWQAEEAVDLARNQVAELIGADPREIVFTSGATESNNLAIKGVAHFYAGKGKHIVTSKTEHKAVLDTCRQLEREGYEVTYLEPMPNGLFTLEQIEGALRDDTILVSIMHVNNEIGVVQNIAAIGELCRSRKILLHVDAVQSVGKIPVDVEALKVDLLSMSAHKVYGPKGIGALYVRRKPRVRLEAQMHGGGHERGMRSGTLPTHQIVGMGEAFRIAKEEMVSEGQRIMALRQRLWDGIKDIEAVYINGDLEQRVPGNLNVSFAYVEGESLIMALKDLAVSSGSACTSASLEPSYVLRALGLNDELAHSSIRFSMGRFTTEEEIDYAIKLIRDSIGRLREMSPLWEMYKDGVDLNTVEWAHH.

Pyridoxal 5'-phosphate is bound by residues 75–76 (AT), Asn155, Gln183, and 203–205 (SAH). N6-(pyridoxal phosphate)lysine is present on Lys206. Thr243 contacts pyridoxal 5'-phosphate. The active-site Cysteine persulfide intermediate is the Cys328. Cys328 is a binding site for [2Fe-2S] cluster.

This sequence belongs to the class-V pyridoxal-phosphate-dependent aminotransferase family. NifS/IscS subfamily. In terms of assembly, homodimer. Forms a heterotetramer with IscU, interacts with other sulfur acceptors. The cofactor is pyridoxal 5'-phosphate.

Its subcellular location is the cytoplasm. It carries out the reaction (sulfur carrier)-H + L-cysteine = (sulfur carrier)-SH + L-alanine. Its pathway is cofactor biosynthesis; iron-sulfur cluster biosynthesis. Functionally, master enzyme that delivers sulfur to a number of partners involved in Fe-S cluster assembly, tRNA modification or cofactor biosynthesis. Catalyzes the removal of elemental sulfur atoms from cysteine to produce alanine. Functions as a sulfur delivery protein for Fe-S cluster synthesis onto IscU, an Fe-S scaffold assembly protein, as well as other S acceptor proteins. The protein is Cysteine desulfurase IscS of Aeromonas hydrophila subsp. hydrophila (strain ATCC 7966 / DSM 30187 / BCRC 13018 / CCUG 14551 / JCM 1027 / KCTC 2358 / NCIMB 9240 / NCTC 8049).